The following is a 1032-amino-acid chain: Vacuolar membrane protease (1032 aa).

The Cytoplasmic portion of the chain corresponds to Met1–Pro11. A helical transmembrane segment spans residues Gly12–Val32. Residues His33–Leu426 lie on the Vacuolar side of the membrane. Asn50 and Asn142 each carry an N-linked (GlcNAc...) asparagine glycan. Zn(2+) contacts are provided by His207 and Asp219. The Proton acceptor role is filled by Glu253. Residues Glu254, Glu279, and His352 each coordinate Zn(2+). A helical transmembrane segment spans residues Phe427–Ile447. The Cytoplasmic segment spans residues Leu448 to Arg482. A helical membrane pass occupies residues Phe483–Lys503. At Phe504–Ser511 the chain is on the vacuolar side. The helical transmembrane segment at Ser512–Met532 threads the bilayer. Residues Arg533 to Arg545 lie on the Cytoplasmic side of the membrane. A helical transmembrane segment spans residues Gly546 to Ala566. The Vacuolar segment spans residues Glu567 to Ala573. A helical membrane pass occupies residues Ala574 to Leu594. Residues Glu595 to Trp708 are Cytoplasmic-facing. A compositionally biased stretch (basic and acidic residues) spans Arg616–Pro631. Residues Arg616–Arg666 form a disordered region. Positions Glu632–Thr649 are enriched in acidic residues. The helical transmembrane segment at Ile709 to Val729 threads the bilayer. Topologically, residues Ala730–Leu745 are vacuolar. A helical transmembrane segment spans residues Val746 to Ile766. Residues His767–Val773 are Cytoplasmic-facing. The helical transmembrane segment at Pro774 to Phe794 threads the bilayer. Topologically, residues Ser795–Val1032 are vacuolar. 2 N-linked (GlcNAc...) asparagine glycosylation sites follow: Asn812 and Asn884.

Belongs to the peptidase M28 family. Zn(2+) serves as cofactor.

Its subcellular location is the vacuole membrane. Functionally, may be involved in vacuolar sorting and osmoregulation. In Fusarium vanettenii (strain ATCC MYA-4622 / CBS 123669 / FGSC 9596 / NRRL 45880 / 77-13-4) (Fusarium solani subsp. pisi), this protein is Vacuolar membrane protease.